Consider the following 338-residue polypeptide: Holliday junction branch migration complex subunit RuvB (338 aa).

Positions 4-187 (ADRLIHAEPQ…FGIPLRLEFY (184 aa)) are large ATPase domain (RuvB-L). ATP is bound by residues R27, G68, K71, T72, T73, 134–136 (EDY), R177, Y187, and R224. A Mg(2+)-binding site is contributed by T72. The interval 188–258 (NVKDLSSIVT…VAELALDMLD (71 aa)) is small ATPAse domain (RuvB-S). The segment at 261-338 (SEGFDYMDRK…RHFDIIQPEK (78 aa)) is head domain (RuvB-H). R297, R316, and R321 together coordinate DNA.

The protein belongs to the RuvB family. In terms of assembly, homohexamer. Forms an RuvA(8)-RuvB(12)-Holliday junction (HJ) complex. HJ DNA is sandwiched between 2 RuvA tetramers; dsDNA enters through RuvA and exits via RuvB. An RuvB hexamer assembles on each DNA strand where it exits the tetramer. Each RuvB hexamer is contacted by two RuvA subunits (via domain III) on 2 adjacent RuvB subunits; this complex drives branch migration. In the full resolvosome a probable DNA-RuvA(4)-RuvB(12)-RuvC(2) complex forms which resolves the HJ.

It is found in the cytoplasm. It catalyses the reaction ATP + H2O = ADP + phosphate + H(+). Functionally, the RuvA-RuvB-RuvC complex processes Holliday junction (HJ) DNA during genetic recombination and DNA repair, while the RuvA-RuvB complex plays an important role in the rescue of blocked DNA replication forks via replication fork reversal (RFR). RuvA specifically binds to HJ cruciform DNA, conferring on it an open structure. The RuvB hexamer acts as an ATP-dependent pump, pulling dsDNA into and through the RuvAB complex. RuvB forms 2 homohexamers on either side of HJ DNA bound by 1 or 2 RuvA tetramers; 4 subunits per hexamer contact DNA at a time. Coordinated motions by a converter formed by DNA-disengaged RuvB subunits stimulates ATP hydrolysis and nucleotide exchange. Immobilization of the converter enables RuvB to convert the ATP-contained energy into a lever motion, pulling 2 nucleotides of DNA out of the RuvA tetramer per ATP hydrolyzed, thus driving DNA branch migration. The RuvB motors rotate together with the DNA substrate, which together with the progressing nucleotide cycle form the mechanistic basis for DNA recombination by continuous HJ branch migration. Branch migration allows RuvC to scan DNA until it finds its consensus sequence, where it cleaves and resolves cruciform DNA. The polypeptide is Holliday junction branch migration complex subunit RuvB (Shewanella woodyi (strain ATCC 51908 / MS32)).